The following is a 290-amino-acid chain: L-fucono-1,5-lactonase (290 aa).

This sequence belongs to the metallo-dependent hydrolases superfamily.

It catalyses the reaction L-fucono-1,5-lactone + H2O = L-fuconate + H(+). The enzyme catalyses L-fucono-1,4-lactone + H2O = L-fuconate + H(+). It carries out the reaction D-arabinono-1,4-lactone + H2O = D-arabinonate + H(+). The catalysed reaction is L-xylono-1,4-lactone + H2O = L-xylonate + H(+). It catalyses the reaction L-galactono-1,4-lactone + H2O = L-galactonate + H(+). In terms of biological role, catalyzes the hydrolysis of L-fucono-1,5-lactone to L-fuconate. Can also hydrolyze L-fucono-1,4-lactone, L-galactono-1,4-lactone D-arabinono-1,4-lactone and L-xylono-1,4-lactone. The chain is L-fucono-1,5-lactonase from Burkholderia ambifaria (strain ATCC BAA-244 / DSM 16087 / CCUG 44356 / LMG 19182 / AMMD) (Burkholderia cepacia (strain AMMD)).